Consider the following 357-residue polypeptide: Transcription factor HHO1 (357 aa).

Disordered regions lie at residues 94–117 (TSIE…ETDI) and 171–198 (NNNI…RKNR). The span at 96 to 109 (IEEEVDDKDDDDEE) shows a compositional bias: acidic residues. Residues 171–182 (NNNIKSPVTTSD) are compositionally biased toward polar residues. The HTH myb-type domain occupies 193-253 (GQRKNRRCWS…HLQKYRLHAR (61 aa)). Positions 224 to 249 (PKQIRDIMKVDGLTNDEVKSHLQKYR) form a DNA-binding region, H-T-H motif.

Its subcellular location is the nucleus. Functionally, probable factor involved in nitrate and phosphate signaling in roots. Integrates nitrate and phosphate starvation responses and adaptation of root architecture, depending on nutrient availabilities. Acts downstream of the nitrate sensor and transporter NPF6.3/NRT1.1. Represses primary root development in response to phosphate deficiency conditions, only when nitrate is present. The polypeptide is Transcription factor HHO1 (Arabidopsis thaliana (Mouse-ear cress)).